Reading from the N-terminus, the 284-residue chain is NAD kinase (284 aa).

Asp-67 acts as the Proton acceptor in catalysis. Residues 67–68, 141–142, Arg-152, Lys-169, Asp-171, 182–187, and Gln-241 contribute to the NAD(+) site; these read DG, ND, and TGYSLS.

It belongs to the NAD kinase family. Requires a divalent metal cation as cofactor.

It is found in the cytoplasm. It catalyses the reaction NAD(+) + ATP = ADP + NADP(+) + H(+). In terms of biological role, involved in the regulation of the intracellular balance of NAD and NADP, and is a key enzyme in the biosynthesis of NADP. Catalyzes specifically the phosphorylation on 2'-hydroxyl of the adenosine moiety of NAD to yield NADP. This chain is NAD kinase, found in Geobacter sulfurreducens (strain ATCC 51573 / DSM 12127 / PCA).